Consider the following 889-residue polypeptide: A disintegrin and metalloproteinase with thrombospondin motifs 8 (889 aa).

A signal peptide spans 1 to 26; that stretch reads MLPAPAAPRWPPLLLLLLLLLPLARG. Residues 27–213 constitute a propeptide that is removed on maturation; sequence APARPAAGGQ…PLGATSRTKR (187 aa). The interval 138–210 is disordered; it reads QGAGGSLAQP…PPPPLGATSR (73 aa). The span at 173-183 shows a compositional bias: basic and acidic residues; that stretch reads EGQRQERGDHQ. Residues 184–197 are compositionally biased toward acidic residues; sequence EDSEEESQEEEAEG. Residues 219–429 enclose the Peptidase M12B domain; it reads RFVETLLVAD…GHGDCLLDAP (211 aa). 11 disulfides stabilise this stretch: C294-C347, C323-C329, C341-C424, C379-C408, C452-C477, C463-C486, C472-C507, C501-C512, C538-C575, C542-C580, and C553-C565. An N-linked (GlcNAc...) asparagine glycan is attached at N344. H363 contacts Zn(2+). E364 is an active-site residue. H367 and H373 together coordinate Zn(2+). N400, N465, and N490 each carry an N-linked (GlcNAc...) asparagine glycan. Residues 438 to 525 form the Disintegrin domain; it reads GLPGRMALYQ…EEVERPKPVA (88 aa). The TSP type-1 1 domain maps to 526–581; sequence DGGWAPWGPWGECSRTCGGGVQFSHRECKDPEPQNGGRYCLGRRAKYQSCHTEECP. Residue N599 is glycosylated (N-linked (GlcNAc...) asparagine). The tract at residues 690 to 831 is spacer; it reads RKVSGSLTPT…RATTNIIQPL (142 aa). The region spanning 833–888 is the TSP type-1 2 domain; that stretch reads HAQWVLGDWSECSSTCGAGWQRRTVECRDPSGQASATCNKALKPEDAKPCESQLCP.

Requires Zn(2+) as cofactor. In terms of processing, the precursor is cleaved by a furin endopeptidase. Glycosylated. Can be O-fucosylated by POFUT2 on a serine or a threonine residue found within the consensus sequence C1-X(2)-(S/T)-C2-G of the TSP type-1 repeat domains where C1 and C2 are the first and second cysteine residue of the repeat, respectively. Fucosylated repeats can then be further glycosylated by the addition of a beta-1,3-glucose residue by the glucosyltransferase, B3GALTL. Fucosylation mediates the efficient secretion of ADAMTS family members. Can also be C-glycosylated with one or two mannose molecules on tryptophan residues within the consensus sequence W-X-X-W of the TPRs, and N-glycosylated. These other glycosylations can also facilitate secretion. Highly expressed in adult and fetal lung, lower expression in brain, placenta, heart, stomach and fetal brain and kidney.

Its subcellular location is the secreted. It localises to the extracellular space. The protein resides in the extracellular matrix. Functionally, has anti-angiogenic properties. In Homo sapiens (Human), this protein is A disintegrin and metalloproteinase with thrombospondin motifs 8 (ADAMTS8).